The sequence spans 463 residues: Bifunctional protein HldE (463 aa).

The tract at residues 1–311 (MKQILVVGDL…EEIALILNQT (311 aa)) is ribokinase. Residue 191-194 (NRIE) participates in ATP binding. Asp-260 is an active-site residue. The cytidylyltransferase stretch occupies residues 334 to 463 (FTNGCFDILH…IERIKRTCND (130 aa)).

It in the N-terminal section; belongs to the carbohydrate kinase PfkB family. This sequence in the C-terminal section; belongs to the cytidylyltransferase family. Homodimer.

The enzyme catalyses D-glycero-beta-D-manno-heptose 7-phosphate + ATP = D-glycero-beta-D-manno-heptose 1,7-bisphosphate + ADP + H(+). It catalyses the reaction D-glycero-beta-D-manno-heptose 1-phosphate + ATP + H(+) = ADP-D-glycero-beta-D-manno-heptose + diphosphate. It participates in nucleotide-sugar biosynthesis; ADP-L-glycero-beta-D-manno-heptose biosynthesis; ADP-L-glycero-beta-D-manno-heptose from D-glycero-beta-D-manno-heptose 7-phosphate: step 1/4. The protein operates within nucleotide-sugar biosynthesis; ADP-L-glycero-beta-D-manno-heptose biosynthesis; ADP-L-glycero-beta-D-manno-heptose from D-glycero-beta-D-manno-heptose 7-phosphate: step 3/4. Its function is as follows. Catalyzes the phosphorylation of D-glycero-D-manno-heptose 7-phosphate at the C-1 position to selectively form D-glycero-beta-D-manno-heptose-1,7-bisphosphate. In terms of biological role, catalyzes the ADP transfer from ATP to D-glycero-beta-D-manno-heptose 1-phosphate, yielding ADP-D-glycero-beta-D-manno-heptose. The chain is Bifunctional protein HldE from Helicobacter pylori (strain Shi470).